The primary structure comprises 321 residues: Lactamase-like protein notP (321 aa).

His-108, His-110, Asp-112, and His-113 together coordinate Zn(2+). Asp-112 functions as the Proton donor/acceptor in the catalytic mechanism.

Belongs to the metallo-beta-lactamase superfamily. It depends on Zn(2+) as a cofactor.

Functionally, lactamase-like protein; part of the gene cluster that mediates the biosynthesis of notoamide, a fungal indole alkaloid that belongs to a family of natural products containing a characteristic bicyclo[2.2.2]diazaoctane core. The first step of notoamide biosynthesis involves coupling of L-proline and L-tryptophan by the bimodular NRPS notE, to produce cyclo-L-tryptophan-L-proline called brevianamide F. The reverse prenyltransferase notF then acts as a deoxybrevianamide E synthase and converts brevianamide F to deoxybrevianamide E via reverse prenylation at C-2 of the indole ring leading to the bicyclo[2.2.2]diazaoctane core. Deoxybrevianamide E is further hydroxylated at C-6 of the indole ring, likely catalyzed by the cytochrome P450 monooxygenase notG, to yield 6-hydroxy-deoxybrevianamide E. 6-hydroxy-deoxybrevianamide E is a specific substrate of the prenyltransferase notC for normal prenylation at C-7 to produce 6-hydroxy-7-prenyl-deoxybrevianamide, also called notoamide S. As the proposed pivotal branching point in notoamide biosynthesis, notoamide S can be diverted to notoamide E through an oxidative pyran ring closure putatively catalyzed by either notH cytochrome P450 monooxygenase or the notD FAD-linked oxidoreductase. This step would be followed by an indole 2,3-epoxidation-initiated pinacol-like rearrangement catalyzed by the notB FAD-dependent monooxygenase leading to the formation of notoamide C and notoamide D. On the other hand notoamide S is converted to notoamide T by notH (or notD), a bifunctional oxidase that also functions as the intramolecular Diels-Alderase responsible for generation of (+)-notoamide T. To generate antipodal (-)-notoaminide T, notH' (or notD') in Aspergillus versicolor is expected to catalyze a Diels-Alder reaction leading to the opposite stereochemistry. The remaining oxidoreductase notD (or notH) likely catalyzes the oxidative pyran ring formation to yield (+)-stephacidin A. The FAD-dependent monooxygenase notI is highly similar to notB and is predicted to catalyze a similar conversion from (+)-stephacidin A to (-)-notoamide B via the 2,3-epoxidation of (+)-stephacidin A followed by a pinacol-type rearrangement. Finally, it remains unclear which enzyme could be responsible for the final hydroxylation steps leading to notoamide A and sclerotiamide. The function of notP in the notoamide biosynthesis has not been determined yet. In Aspergillus sp. (strain MF297-2), this protein is Lactamase-like protein notP.